The primary structure comprises 342 residues: Deoxyguanosinetriphosphate triphosphohydrolase-like protein (342 aa).

An HD domain is found at 75–190 (RLVHTLEVSQ…VRFADKIAYV (116 aa)).

The protein belongs to the dGTPase family. Type 2 subfamily.

The chain is Deoxyguanosinetriphosphate triphosphohydrolase-like protein from Clostridium perfringens (strain 13 / Type A).